The chain runs to 431 residues: Gamma-glutamyl phosphate reductase (431 aa).

This sequence belongs to the gamma-glutamyl phosphate reductase family.

Its subcellular location is the cytoplasm. The catalysed reaction is L-glutamate 5-semialdehyde + phosphate + NADP(+) = L-glutamyl 5-phosphate + NADPH + H(+). Its pathway is amino-acid biosynthesis; L-proline biosynthesis; L-glutamate 5-semialdehyde from L-glutamate: step 2/2. Functionally, catalyzes the NADPH-dependent reduction of L-glutamate 5-phosphate into L-glutamate 5-semialdehyde and phosphate. The product spontaneously undergoes cyclization to form 1-pyrroline-5-carboxylate. The chain is Gamma-glutamyl phosphate reductase from Methylobacterium sp. (strain 4-46).